The sequence spans 215 residues: Probable transaldolase (215 aa).

K83 acts as the Schiff-base intermediate with substrate in catalysis.

The protein belongs to the transaldolase family. Type 3B subfamily.

Its subcellular location is the cytoplasm. It catalyses the reaction D-sedoheptulose 7-phosphate + D-glyceraldehyde 3-phosphate = D-erythrose 4-phosphate + beta-D-fructose 6-phosphate. It functions in the pathway carbohydrate degradation; pentose phosphate pathway; D-glyceraldehyde 3-phosphate and beta-D-fructose 6-phosphate from D-ribose 5-phosphate and D-xylulose 5-phosphate (non-oxidative stage): step 2/3. Functionally, transaldolase is important for the balance of metabolites in the pentose-phosphate pathway. This chain is Probable transaldolase, found in Methanococcus maripaludis (strain DSM 14266 / JCM 13030 / NBRC 101832 / S2 / LL).